The following is a 254-amino-acid chain: tRNA pseudouridine synthase A (254 aa).

The active-site Nucleophile is the Asp-52. Position 111 (Tyr-111) interacts with substrate.

The protein belongs to the tRNA pseudouridine synthase TruA family. Homodimer.

The catalysed reaction is uridine(38/39/40) in tRNA = pseudouridine(38/39/40) in tRNA. In terms of biological role, formation of pseudouridine at positions 38, 39 and 40 in the anticodon stem and loop of transfer RNAs. This chain is tRNA pseudouridine synthase A, found in Rhizorhabdus wittichii (strain DSM 6014 / CCUG 31198 / JCM 15750 / NBRC 105917 / EY 4224 / RW1) (Sphingomonas wittichii).